Here is a 25-residue protein sequence, read N- to C-terminus: Chrysophsin-1 (25 aa).

Histidine 25 carries the histidine amide modification.

As to expression, gill. Localized in certain epithelial cells lining the surface of secondary lamellae and eosinophilic granule cell-like cells at the base of secondary lamellae.

It is found in the secreted. In terms of biological role, has antibacterial activity against Gram-positive bacteria B.subtilis ATCC 6633, L.garvieae ATCC 49156 and S.iniae F-8502, and Gram-negative bacteria E.coli WT-2, V.anguillarum ATCC 19264, V.penaeicida KHA, V.harveyi ATCC 14126, V.vulnificus ATCC 33148, A.salmonicida NCMB 1102 and P.putida ATCC 12633. Has hemolytic activity against human red blood cells. Seems to disrupt the membranes by adopting an alpha helical conformation. May play a significant role in innate host defense. This Pagrus major (Red sea bream) protein is Chrysophsin-1.